The following is a 769-amino-acid chain: Serine protease HtrA-like (769 aa).

The segment covering 1–20 (MDIGKKHVIPKSQYRRKRRE) has biased composition (basic residues). The tract at residues 1-390 (MDIGKKHVIP…ATSKLNKGRA (390 aa)) is disordered. Composition is skewed to basic and acidic residues over residues 21 to 64 (FFHN…ERFK) and 71 to 108 (LEQRNRDVNENKAEESKSNQDSKSAYNRDHYLTDDVSK). Positions 126-137 (YEQNSEATLSTK) are enriched in polar residues. Positions 138–186 (STDKVESTDMRKLSSDKNKVGHEEQHVLSKPSEHDKETRIDFESSRTDS) are enriched in basic and acidic residues. Residues 247–262 (QQSQNEQTKTYTYGDS) are compositionally biased toward polar residues. Basic and acidic residues-rich tracts occupy residues 264–296 (QNDKSNYENDLSHHMPSISDDKDNVMRENHIVD) and 310–330 (KTDDDRKLDEKIHVEDKHKQN). Positions 331–347 (ADSSETVGYQSQSSASH) are enriched in polar residues. A compositionally biased stretch (basic and acidic residues) spans 348–364 (RITEKRNNAINDHDKLN). Polar residues predominate over residues 366–390 (QKPNAKTSANNNQKKATSKLNKGRA). Residues 410–430 (LVILMGIIILIVILNAIFNNV) form a helical membrane-spanning segment. Active-site charge relay system residues include His-504, Asp-534, and Ser-619. The region spanning 680 to 733 (IASLNSFERQAVKLPGKVKNGVVVDQVDNNGLADQSGLKKGDVITELDGKLLED) is the PDZ domain.

The protein belongs to the peptidase S1C family.

It localises to the cell membrane. This Staphylococcus aureus (strain MSSA476) protein is Serine protease HtrA-like.